We begin with the raw amino-acid sequence, 99 residues long: Cytochrome c oxidase subunit 4 isoform 1, mitochondrial (99 aa).

Over 1-73 (SVVKREDFSL…TFAEMNRGSN (73 aa)) the chain is Mitochondrial matrix. At Lys-4 the chain carries N6-acetyllysine; alternate. Position 4 is an N6-succinyllysine; alternate (Lys-4). At Lys-28 the chain carries N6-acetyllysine. Phosphoserine occurs at positions 31 and 33. Lys-35 is modified (N6-acetyllysine; alternate). Lys-35 carries the N6-succinyllysine; alternate modification. N6-acetyllysine is present on Lys-42. The helical transmembrane segment at 74-99 (EWKTVVGTATFFIGFTALIIMWQKRY) threads the bilayer.

It belongs to the cytochrome c oxidase IV family. Component of the cytochrome c oxidase (complex IV, CIV), a multisubunit enzyme composed of 14 subunits. The complex is composed of a catalytic core of 3 subunits MT-CO1, MT-CO2 and MT-CO3, encoded in the mitochondrial DNA, and 11 supernumerary subunits COX4I, COX5A, COX5B, COX6A, COX6B, COX6C, COX7A, COX7B, COX7C, COX8 and NDUFA4, which are encoded in the nuclear genome. The complex exists as a monomer or a dimer and forms supercomplexes (SCs) in the inner mitochondrial membrane with NADH-ubiquinone oxidoreductase (complex I, CI) and ubiquinol-cytochrome c oxidoreductase (cytochrome b-c1 complex, complex III, CIII), resulting in different assemblies (supercomplex SCI(1)III(2)IV(1) and megacomplex MCI(2)III(2)IV(2)). Interacts with PHB2; the interaction decreases in absence of SPHK2. Interacts with AFG1L. Interacts with ABCB7; this interaction allows the regulation of cellular iron homeostasis and cellular reactive oxygen species (ROS) levels in cardiomyocytes. Interacts with FLVCR2; this interaction occurs in the absence of heme and is disrupted upon heme binding. Interacts with IRGC.

Its subcellular location is the mitochondrion inner membrane. Its pathway is energy metabolism; oxidative phosphorylation. In terms of biological role, component of the cytochrome c oxidase, the last enzyme in the mitochondrial electron transport chain which drives oxidative phosphorylation. The respiratory chain contains 3 multisubunit complexes succinate dehydrogenase (complex II, CII), ubiquinol-cytochrome c oxidoreductase (cytochrome b-c1 complex, complex III, CIII) and cytochrome c oxidase (complex IV, CIV), that cooperate to transfer electrons derived from NADH and succinate to molecular oxygen, creating an electrochemical gradient over the inner membrane that drives transmembrane transport and the ATP synthase. Cytochrome c oxidase is the component of the respiratory chain that catalyzes the reduction of oxygen to water. Electrons originating from reduced cytochrome c in the intermembrane space (IMS) are transferred via the dinuclear copper A center (CU(A)) of subunit 2 and heme A of subunit 1 to the active site in subunit 1, a binuclear center (BNC) formed by heme A3 and copper B (CU(B)). The BNC reduces molecular oxygen to 2 water molecules using 4 electrons from cytochrome c in the IMS and 4 protons from the mitochondrial matrix. This chain is Cytochrome c oxidase subunit 4 isoform 1, mitochondrial (COX4I1), found in Trachypithecus cristatus (Silvered leaf-monkey).